Here is a 66-residue protein sequence, read N- to C-terminus: Potassium channel toxin alpha-KTx 30.3 (66 aa).

Positions 1–24 (MNKTFFLVVIMATVLVLAFDATDA) are cleaved as a signal peptide. 3 cysteine pairs are disulfide-bonded: C30-C50, C36-C55, and C40-C57.

The protein belongs to the short scorpion toxin superfamily. Potassium channel inhibitor family. Alpha-KTx 30 subfamily. Expressed by the venom gland.

It is found in the secreted. Inhibits Kv1.3/KCNA3 channel. The polypeptide is Potassium channel toxin alpha-KTx 30.3 (Scorpiops jendeki (Scorpion)).